The primary structure comprises 464 residues: NADH dehydrogenase [ubiquinone] flavoprotein 1, mitochondrial (464 aa).

The N-terminal 20 residues, 1 to 20 (MLATRRLLGWSLPARVSVRF), are a transit peptide targeting the mitochondrion. An N6-acetyllysine; alternate modification is found at Lys-81. Lys-81 bears the N6-succinyllysine; alternate mark. 87–96 (GRGGAGFPTG) contributes to the NADH binding site. Lys-104 carries the post-translational modification N6-acetyllysine. 199-247 (RGAGAYICGEETALIESIEGKQGKPRLKPPFPADVGVFGCPTTVANVET) is a binding site for FMN. The residue at position 257 (Arg-257) is an Omega-N-methylarginine. An N6-acetyllysine modification is found at Lys-375. [4Fe-4S] cluster-binding residues include Cys-379, Cys-382, Cys-385, and Cys-425.

The protein belongs to the complex I 51 kDa subunit family. In terms of assembly, core subunit of respiratory chain NADH dehydrogenase (Complex I) which is composed of 45 different subunits. This is a component of the flavoprotein-sulfur (FP) fragment of the enzyme. Interacts with RAB5IF. It depends on FMN as a cofactor. Requires [4Fe-4S] cluster as cofactor.

Its subcellular location is the mitochondrion inner membrane. It catalyses the reaction a ubiquinone + NADH + 5 H(+)(in) = a ubiquinol + NAD(+) + 4 H(+)(out). Its function is as follows. Core subunit of the mitochondrial membrane respiratory chain NADH dehydrogenase (Complex I) which catalyzes electron transfer from NADH through the respiratory chain, using ubiquinone as an electron acceptor. Part of the peripheral arm of the enzyme, where the electrons from NADH are accepted by flavin mononucleotide (FMN) and then passed along a chain of iron-sulfur clusters by electron tunnelling to the final acceptor ubiquinone. Contains FMN, which is the initial electron acceptor as well as one iron-sulfur cluster. The chain is NADH dehydrogenase [ubiquinone] flavoprotein 1, mitochondrial from Pan troglodytes (Chimpanzee).